The sequence spans 486 residues: Small ribosomal subunit protein uS4m (486 aa).

Residues 103–172 form the S4 RNA-binding domain; sequence KRLDFALFRA…AKKPSFQEAL (70 aa).

Belongs to the universal ribosomal protein uS4 family. In terms of assembly, component of the mitochondrial small ribosomal subunit (mt-SSU). Mature yeast 74S mitochondrial ribosomes consist of a small (37S) and a large (54S) subunit. The 37S small subunit contains a 15S ribosomal RNA (15S mt-rRNA) and 34 different proteins. The 54S large subunit contains a 21S rRNA (21S mt-rRNA) and 46 different proteins. uS3m, uS4m and uS5m form the narrow entry site of the mRNA channel.

Its subcellular location is the mitochondrion. Functionally, component of the mitochondrial ribosome (mitoribosome), a dedicated translation machinery responsible for the synthesis of mitochondrial genome-encoded proteins, including at least some of the essential transmembrane subunits of the mitochondrial respiratory chain. The mitoribosomes are attached to the mitochondrial inner membrane and translation products are cotranslationally integrated into the membrane. This chain is Small ribosomal subunit protein uS4m (NAM9), found in Saccharomyces cerevisiae (strain ATCC 204508 / S288c) (Baker's yeast).